Here is a 171-residue protein sequence, read N- to C-terminus: 3-hydroxydecanoyl-[acyl-carrier-protein] dehydratase (171 aa).

Residue histidine 70 is part of the active site.

It belongs to the thioester dehydratase family. FabA subfamily. Homodimer.

The protein resides in the cytoplasm. It catalyses the reaction a (3R)-hydroxyacyl-[ACP] = a (2E)-enoyl-[ACP] + H2O. The enzyme catalyses (3R)-hydroxydecanoyl-[ACP] = (2E)-decenoyl-[ACP] + H2O. The catalysed reaction is (2E)-decenoyl-[ACP] = (3Z)-decenoyl-[ACP]. It participates in lipid metabolism; fatty acid biosynthesis. Necessary for the introduction of cis unsaturation into fatty acids. Catalyzes the dehydration of (3R)-3-hydroxydecanoyl-ACP to E-(2)-decenoyl-ACP and then its isomerization to Z-(3)-decenoyl-ACP. Can catalyze the dehydratase reaction for beta-hydroxyacyl-ACPs with saturated chain lengths up to 16:0, being most active on intermediate chain length. The sequence is that of 3-hydroxydecanoyl-[acyl-carrier-protein] dehydratase from Shewanella putrefaciens (strain CN-32 / ATCC BAA-453).